The following is a 416-amino-acid chain: uncharacterized protein (416 aa).

Residues 3 to 150 form the N-acetyltransferase domain; it reads LDVRTITPSE…SVYRAGLDAR (148 aa). Acetyl-CoA contacts are provided by residues 83-85 and 91-96; these read VTV and RRGLLS. Tyr124 functions as the Proton donor in the catalytic mechanism. Phe416 serves as the catalytic Proton acceptor; via carboxylate.

Belongs to the acetyltransferase Eis family. As to quaternary structure, homohexamer; trimer of dimers.

This is an uncharacterized protein from Streptomyces griseus subsp. griseus (strain JCM 4626 / CBS 651.72 / NBRC 13350 / KCC S-0626 / ISP 5235).